Here is a 430-residue protein sequence, read N- to C-terminus: Adenylosuccinate synthetase (430 aa).

GTP-binding positions include 12-18 and 40-42; these read GDEGKGK and GHT. The Proton acceptor role is filled by D13. 2 residues coordinate Mg(2+): D13 and G40. IMP is bound by residues 13–16, 38–41, T128, R142, Q223, T238, and R302; these read DEGK and NAGH. The active-site Proton donor is H41. Substrate is bound at residue 298–304; the sequence is TTTGRPR. GTP contacts are provided by residues R304, 330–332, and 412–414; these read LLD and SVG.

The protein belongs to the adenylosuccinate synthetase family. As to quaternary structure, homodimer. The cofactor is Mg(2+).

Its subcellular location is the cytoplasm. The enzyme catalyses IMP + L-aspartate + GTP = N(6)-(1,2-dicarboxyethyl)-AMP + GDP + phosphate + 2 H(+). Its pathway is purine metabolism; AMP biosynthesis via de novo pathway; AMP from IMP: step 1/2. Its function is as follows. Plays an important role in the de novo pathway of purine nucleotide biosynthesis. Catalyzes the first committed step in the biosynthesis of AMP from IMP. The chain is Adenylosuccinate synthetase from Listeria innocua serovar 6a (strain ATCC BAA-680 / CLIP 11262).